An 868-amino-acid polypeptide reads, in one-letter code: Pro-neuregulin-2, membrane-bound isoform (868 aa).

Positions methionine 1 to alanine 114 are disordered. The propeptide occupies methionine 1–alanine 127. Over residues serine 19–proline 75 the composition is skewed to low complexity. Residues asparagine 33 and asparagine 34 are each glycosylated (N-linked (GlcNAc...) asparagine). Residues alanine 76–arginine 90 show a composition bias toward pro residues. Low complexity predominate over residues serine 91–glycine 108. The Extracellular portion of the chain corresponds to cysteine 128–arginine 429. 3 N-linked (GlcNAc...) asparagine glycosylation sites follow: asparagine 163, asparagine 294, and asparagine 362. The 96-residue stretch at proline 253–serine 348 folds into the Ig-like C2-type domain. 4 disulfide bridges follow: cysteine 273/cysteine 327, cysteine 361/cysteine 375, cysteine 369/cysteine 386, and cysteine 388/cysteine 397. In terms of domain architecture, EGF-like spans histidine 357–leucine 398. The helical transmembrane segment at valine 430–alanine 450 threads the bilayer. Over tyrosine 451–leucine 868 the chain is Cytoplasmic. Disordered stretches follow at residues methionine 469–aspartate 488, threonine 516–leucine 553, leucine 671–arginine 690, alanine 720–leucine 806, and leucine 823–leucine 868. Residues serine 518–serine 530 are compositionally biased toward low complexity. A compositionally biased stretch (basic and acidic residues) spans histidine 538 to glutamate 551. Over residues leucine 766–alanine 794 the composition is skewed to low complexity.

This sequence belongs to the neuregulin family. In terms of assembly, interacts with ERBB3 and ERBB4. In terms of processing, proteolytic cleavage close to the plasma membrane on the external face leads to the release of the soluble growth factor form. Extensive glycosylation precedes the proteolytic cleavage. In terms of tissue distribution, expressed in most parts of the brain, especially the olfactory bulb and cerebellum where it localizes in granule and Purkinje cells. In the hippocampus, found in the granule cells of the dentate gyrus. In the basal forebrain, found in the cholinergic cells. In the hindbrain, weakly detectable in the motor trigeminal nucleus. Not detected in the hypothalamus. Also found in the liver and in the thymus. Not detected in heart, adrenal gland, or testis.

Its subcellular location is the cell membrane. It localises to the secreted. Its function is as follows. Direct ligand for ERBB3 and ERBB4 tyrosine kinase receptors. Concomitantly recruits ERBB1 and ERBB2 coreceptors, resulting in ligand-stimulated tyrosine phosphorylation and activation of the ERBB receptors. May also promote the heterodimerization with the EGF receptor. This Rattus norvegicus (Rat) protein is Pro-neuregulin-2, membrane-bound isoform (Nrg2).